We begin with the raw amino-acid sequence, 290 residues long: Shikimate dehydrogenase (NADP(+)) (290 aa).

Shikimate-binding positions include 19–21 (SLS) and serine 65. Catalysis depends on lysine 69, which acts as the Proton acceptor. Shikimate-binding residues include asparagine 90 and aspartate 105. Residues 129–133 (GAGGA) and leucine 231 each bind NADP(+). Tyrosine 233 is a shikimate binding site. Glycine 254 contacts NADP(+).

The protein belongs to the shikimate dehydrogenase family. As to quaternary structure, homodimer.

The catalysed reaction is shikimate + NADP(+) = 3-dehydroshikimate + NADPH + H(+). The protein operates within metabolic intermediate biosynthesis; chorismate biosynthesis; chorismate from D-erythrose 4-phosphate and phosphoenolpyruvate: step 4/7. Its function is as follows. Involved in the biosynthesis of the chorismate, which leads to the biosynthesis of aromatic amino acids. Catalyzes the reversible NADPH linked reduction of 3-dehydroshikimate (DHSA) to yield shikimate (SA). The chain is Shikimate dehydrogenase (NADP(+)) from Latilactobacillus sakei subsp. sakei (strain 23K) (Lactobacillus sakei subsp. sakei).